The sequence spans 95 residues: Large ribosomal subunit protein uL23 (95 aa).

The protein belongs to the universal ribosomal protein uL23 family. In terms of assembly, part of the 50S ribosomal subunit. Contacts protein L29, and trigger factor when it is bound to the ribosome.

Functionally, one of the early assembly proteins it binds 23S rRNA. One of the proteins that surrounds the polypeptide exit tunnel on the outside of the ribosome. Forms the main docking site for trigger factor binding to the ribosome. In Desulforamulus reducens (strain ATCC BAA-1160 / DSM 100696 / MI-1) (Desulfotomaculum reducens), this protein is Large ribosomal subunit protein uL23.